The following is a 647-amino-acid chain: Threonine--tRNA ligase (647 aa).

The TGS domain maps to 1 to 63 (MDKINITFPD…EEDGSIEIVT (63 aa)). Residues 242–540 (DHRKIGKELD…LTEETKGAFP (299 aa)) form a catalytic region. Zn(2+)-binding residues include cysteine 336, histidine 387, and histidine 517.

Belongs to the class-II aminoacyl-tRNA synthetase family. Homodimer. It depends on Zn(2+) as a cofactor.

The protein localises to the cytoplasm. It catalyses the reaction tRNA(Thr) + L-threonine + ATP = L-threonyl-tRNA(Thr) + AMP + diphosphate + H(+). Functionally, catalyzes the attachment of threonine to tRNA(Thr) in a two-step reaction: L-threonine is first activated by ATP to form Thr-AMP and then transferred to the acceptor end of tRNA(Thr). Also edits incorrectly charged L-seryl-tRNA(Thr). The sequence is that of Threonine--tRNA ligase from Staphylococcus carnosus (strain TM300).